A 661-amino-acid polypeptide reads, in one-letter code: Lateral signaling target protein 2 (661 aa).

Residues Val294–Gln432 form a disordered region. Residues Asp297 to Asn310 show a composition bias toward polar residues. 2 stretches are compositionally biased toward low complexity: residues Ser330–Ser360 and Thr381–Pro393. Positions Glu394–Glu411 are enriched in acidic residues. Over residues Val412–Glu422 the composition is skewed to basic and acidic residues. The FYVE-type zinc-finger motif lies at Asp566–Leu626. Residues Cys572, Cys575, Cys588, Cys591, Cys596, Cys599, Cys618, and Cys621 each contribute to the Zn(2+) site. Polar residues predominate over residues Asn641–Glu650. The segment at Asn641 to Ser661 is disordered. The segment covering Gln651 to Ser661 has biased composition (low complexity).

The protein belongs to the lst-2 family. As to expression, expressed in vulval precursor cells (VPCs).

Its function is as follows. Negative regulator of epidermal growth factor receptor (EGFR) signaling. The sequence is that of Lateral signaling target protein 2 (lst-2) from Caenorhabditis elegans.